Here is a 64-residue protein sequence, read N- to C-terminus: Prokaryotic ubiquitin-like protein Pup (64 aa).

Polar residues predominate over residues 1–10 (MNQNGSQIHS). Residues 1–32 (MNQNGSQIHSDGNGHSDDTDTPGVSAGQVSVN) are disordered. The ARC ATPase binding stretch occupies residues 20–58 (DTPGVSAGQVSVNTAGVDDLLDEIDGLLESNAEEFVRSY). Gln64 carries the post-translational modification Deamidated glutamine. Residue Gln64 forms an Isoglutamyl lysine isopeptide (Gln-Lys) (interchain with K-? in acceptor proteins) linkage.

It belongs to the prokaryotic ubiquitin-like protein family. As to quaternary structure, strongly interacts with the proteasome-associated ATPase ARC through a hydrophobic interface; the interacting region of Pup lies in its C-terminal half. There is one Pup binding site per ARC hexamer ring. Post-translationally, is modified by deamidation of its C-terminal glutamine to glutamate by the deamidase Dop, a prerequisite to the subsequent pupylation process.

Its pathway is protein degradation; proteasomal Pup-dependent pathway. Functionally, protein modifier that is covalently attached to lysine residues of substrate proteins, thereby targeting them for proteasomal degradation. The tagging system is termed pupylation. This Corynebacterium diphtheriae (strain ATCC 700971 / NCTC 13129 / Biotype gravis) protein is Prokaryotic ubiquitin-like protein Pup.